The primary structure comprises 235 residues: MICOS complex subunit MIC25 (235 aa).

Gly2 carries N-myristoyl glycine lipidation. Phosphoserine occurs at positions 13 and 31. Disordered regions lie at residues 31-90 (SENV…VKRY) and 106-132 (KRER…HEEQ). Residues 129 to 176 (HEEQKSVRLARELESREAELRRRDTFYKEQLERIERKNAEMYKLSSEQ) are a coiled coil. In terms of domain architecture, CHCH spans 194-235 (EPVCSGLQAQILHCYRDRPHEVLLCSDLVKAYQRCVSAAHKG). 2 short sequence motifs (cx9C motif) span residues 197 to 207 (CSGLQAQILHC) and 218 to 228 (CSDLVKAYQRC). 2 disulfides stabilise this stretch: Cys197-Cys228 and Cys207-Cys218.

It belongs to the MICOS complex subunit Mic19 family. Metazoan Mic25 subfamily. Component of the mitochondrial contact site and cristae organizing system (MICOS) complex, composed of at least MICOS10/MIC10, CHCHD3/MIC19, CHCHD6/MIC25, APOOL/MIC27, IMMT/MIC60, APOO/MIC23/MIC26 and MICOS13/MIC13. This complex was also known under the names MINOS or MitOS complex. The MICOS complex associates with mitochondrial outer membrane proteins SAMM50, MTX1 and MTX2 (together described as components of the mitochondrial outer membrane sorting assembly machinery (SAM) complex) and DNAJC11, mitochondrial inner membrane protein TMEM11 and with HSPA9. The MICOS and SAM complexes together with DNAJC11 are part of a large protein complex spanning both membranes termed the mitochondrial intermembrane space bridging (MIB) complex. Interacts with DISC1. Interacts with DISC1. Interacts with IMMT/MIC60. As to quaternary structure, (Microbial infection) Interacts with human cytomegalovirus protein UL37 isoform vMIA; this interaction rewires mitochondria by engaging the conserved MICOS complex.

The protein localises to the mitochondrion inner membrane. It localises to the mitochondrion. Its function is as follows. Component of the MICOS complex, a large protein complex of the mitochondrial inner membrane that plays crucial roles in the maintenance of crista junctions, inner membrane architecture, and formation of contact sites to the outer membrane. This chain is MICOS complex subunit MIC25 (CHCHD6), found in Homo sapiens (Human).